The primary structure comprises 85 residues: Contulakin-Lt1 (85 aa).

Positions 1–22 are cleaved as a signal peptide; that stretch reads MRTAYWVMVMMMVGITAPLSEG. The propeptide occupies 23 to 60; that stretch reads RKLNDAIRGLVADYLTPQLLQSLVSAPYPEFQLDDPNL. Cys65 and Cys70 are oxidised to a cystine. Residues 76–85 constitute a propeptide that is removed on maturation; the sequence is RRRDLKKRNK.

It belongs to the conotoxin C superfamily. In terms of tissue distribution, expressed by the venom duct.

The protein localises to the secreted. Functionally, acts as an agonist of neurotensin receptors. It binds to human neurotensin type 1 receptor (NTSR1), rat neurotensin types 1 and 2 receptors (NTSR1/NTSR2) and mouse neurotensin type 3 receptor (SORT1). The polypeptide is Contulakin-Lt1 (Conus litteratus (Lettered cone)).